The sequence spans 219 residues: Orotate phosphoribosyltransferase (219 aa).

K26 contributes to the 5-phospho-alpha-D-ribose 1-diphosphate binding site. An orotate-binding site is contributed by 34 to 35 (FF). 5-phospho-alpha-D-ribose 1-diphosphate is bound by residues 72-73 (YK), R102, K103, K106, H108, and 128-136 (DDVITAGTA). 2 residues coordinate orotate: T132 and R160.

It belongs to the purine/pyrimidine phosphoribosyltransferase family. PyrE subfamily. Homodimer.

The catalysed reaction is orotidine 5'-phosphate + diphosphate = orotate + 5-phospho-alpha-D-ribose 1-diphosphate. Its pathway is pyrimidine metabolism; UMP biosynthesis via de novo pathway; UMP from orotate: step 1/2. In terms of biological role, catalyzes the transfer of a ribosyl phosphate group from 5-phosphoribose 1-diphosphate to orotate, leading to the formation of orotidine monophosphate (OMP). This chain is Orotate phosphoribosyltransferase (URA5), found in Yarrowia lipolytica (strain CLIB 122 / E 150) (Yeast).